The sequence spans 199 residues: GTP cyclohydrolase-2 (199 aa).

Position 49–53 (49–53 (RIHSE)) interacts with GTP. The Zn(2+) site is built by Cys54, Cys65, and Cys67. GTP contacts are provided by residues Gln70, 92–94 (EGR), and Thr114. Catalysis depends on Asp126, which acts as the Proton acceptor. Arg128 acts as the Nucleophile in catalysis. GTP-binding residues include Thr149 and Lys154.

Belongs to the GTP cyclohydrolase II family. In terms of assembly, homodimer. Requires Zn(2+) as cofactor.

It carries out the reaction GTP + 4 H2O = 2,5-diamino-6-hydroxy-4-(5-phosphoribosylamino)-pyrimidine + formate + 2 phosphate + 3 H(+). The protein operates within cofactor biosynthesis; riboflavin biosynthesis; 5-amino-6-(D-ribitylamino)uracil from GTP: step 1/4. In terms of biological role, catalyzes the conversion of GTP to 2,5-diamino-6-ribosylamino-4(3H)-pyrimidinone 5'-phosphate (DARP), formate and pyrophosphate. The sequence is that of GTP cyclohydrolase-2 from Blochmanniella floridana.